The chain runs to 335 residues: Antigen-presenting glycoprotein CD1d (335 aa).

The signal sequence occupies residues 1–19; the sequence is MGCLLFLLLWALLQAWGSA. Residues 20-301 lie on the Extracellular side of the membrane; the sequence is EVPQRLFPLR…VLYWGGSYTS (282 aa). N-linked (GlcNAc...) asparagine glycans are attached at residues Asn-38 and Asn-60. Asp-98 contributes to the a D-galactosylceramide binding site. Cystine bridges form between Cys-120–Cys-184 and Cys-224–Cys-279. A glycan (N-linked (GlcNAc...) asparagine) is linked at Asn-126. 169 to 172 is a binding site for a D-galactosylceramide; the sequence is DKWT. Asn-181 carries an N-linked (GlcNAc...) asparagine glycan. The region spanning 185-292 is the Ig-like domain; sequence PQFVSGLLES…HSSLEGQDIV (108 aa). The chain crosses the membrane as a helical span at residues 302 to 322; that stretch reads MGLIALAVLACLLFLLIVGFT. The Cytoplasmic portion of the chain corresponds to 323 to 335; it reads SRFKRQTSYQGVL. The short motif at 331–334 is the Internalization signal element; sequence YQGV.

Heterodimer with B2M (beta-2-microglobulin). Interacts with MHC II. Expressed on cortical thymocytes, on certain T-cell leukemias, and in various other tissues.

The protein resides in the cell membrane. Its subcellular location is the basolateral cell membrane. It is found in the endosome membrane. The protein localises to the lysosome membrane. It localises to the endoplasmic reticulum membrane. Antigen-presenting protein that binds self and non-self glycolipids and presents them to T-cell receptors on natural killer T-cells. This Homo sapiens (Human) protein is Antigen-presenting glycoprotein CD1d (CD1D).